The following is a 271-amino-acid chain: Formamidopyrimidine-DNA glycosylase (271 aa).

Catalysis depends on Pro2, which acts as the Schiff-base intermediate with DNA. The Proton donor role is filled by Glu3. Residue Lys56 is the Proton donor; for beta-elimination activity of the active site. DNA is bound by residues His89, Arg107, and Arg151. The segment at 236–270 adopts an FPG-type zinc-finger fold; that stretch reads MVYARQGQPCRVCATPIKSLRQGQRSTFYCPHCQK. Arg260 (proton donor; for delta-elimination activity) is an active-site residue.

The protein belongs to the FPG family. As to quaternary structure, monomer. Zn(2+) serves as cofactor.

It carries out the reaction Hydrolysis of DNA containing ring-opened 7-methylguanine residues, releasing 2,6-diamino-4-hydroxy-5-(N-methyl)formamidopyrimidine.. The enzyme catalyses 2'-deoxyribonucleotide-(2'-deoxyribose 5'-phosphate)-2'-deoxyribonucleotide-DNA = a 3'-end 2'-deoxyribonucleotide-(2,3-dehydro-2,3-deoxyribose 5'-phosphate)-DNA + a 5'-end 5'-phospho-2'-deoxyribonucleoside-DNA + H(+). Its function is as follows. Involved in base excision repair of DNA damaged by oxidation or by mutagenic agents. Acts as a DNA glycosylase that recognizes and removes damaged bases. Has a preference for oxidized purines, such as 7,8-dihydro-8-oxoguanine (8-oxoG). Has AP (apurinic/apyrimidinic) lyase activity and introduces nicks in the DNA strand. Cleaves the DNA backbone by beta-delta elimination to generate a single-strand break at the site of the removed base with both 3'- and 5'-phosphates. The chain is Formamidopyrimidine-DNA glycosylase from Albidiferax ferrireducens (strain ATCC BAA-621 / DSM 15236 / T118) (Rhodoferax ferrireducens).